A 708-amino-acid chain; its full sequence is O-antigen chain terminator bifunctional methyltransferase/kinase WbdD (708 aa).

A methyltransferase region spans residues 1-210 (MTKDLNTLVS…VPRPMYLVSN (210 aa)). S-adenosyl-L-methionine-binding positions include 16–17 (YQ), Arg-36, Gly-61, 82–87 (DFQQEN), 108–111 (GRIE), and Leu-128. Positions 211 to 459 (HRVLINDFNQ…AKLPSAEQQR (249 aa)) are kinase. Residues Pro-229, His-237, 241–243 (RRY), Lys-252, Glu-274, 309–311 (EKL), Met-358, and Asp-369 each bind ATP. A coiled-coil region spans residues 485–594 (AGSEALRGQI…EIEKIHRSRS (110 aa)). The required for membrane-binding stretch occupies residues 601-669 (YRYLGLQIHL…RLYRRMNPLP (69 aa)). Positions 687–708 (VMHPELLPPEVYEIYLKLTKNK) are required for localizing WbdA to the membrane.

The protein belongs to the WbdD family. In terms of assembly, homotrimer in solution. Interacts with WbdA.

The protein localises to the cell inner membrane. The enzyme catalyses 3-O-phospho-alpha-D-Man-(1-&gt;2)-alpha-D-Man-(1-&gt;2)-[alpha-D-Man-(1-&gt;3)-alpha-D-Man-(1-&gt;3)-alpha-D-Man-(1-&gt;2)-alpha-D-Man-(1-&gt;2)](n)-alpha-D-Man-(1-&gt;3)-alpha-D-Man-(1-&gt;3)-alpha-D-Man-(1-&gt;3)-alpha-D-GlcNAc-di-trans,octa-cis-undecaprenyl diphosphate + S-adenosyl-L-methionine = 3-O-methylphospho-alpha-D-Man-(1-&gt;2)-alpha-D-Man-(1-&gt;2)-[alpha-D-Man-(1-&gt;3)-alpha-D-Man-(1-&gt;3)-alpha-D-Man-(1-&gt;2)-alpha-D-Man-(1-&gt;2)](n)-alpha-D-Man-(1-&gt;3)-alpha-D-Man-(1-&gt;3)-alpha-D-Man-(1-&gt;3)-alpha-D-GlcNAc-di-trans,octa-cis-undecaprenyl diphosphate + S-adenosyl-L-homocysteine. The catalysed reaction is alpha-D-Man-(1-&gt;2)-alpha-D-Man-(1-&gt;2)-[alpha-D-Man-(1-&gt;3)-alpha-D-Man-(1-&gt;3)-alpha-D-Man-(1-&gt;2)-alpha-D-Man-(1-&gt;2)](n)-alpha-D-Man-(1-&gt;3)-alpha-D-Man-(1-&gt;3)-alpha-D-Man-(1-&gt;3)-alpha-D-GlcNAc-di-trans,octa-cis-undecaprenyl diphosphate + ATP = 3-O-phospho-alpha-D-Man-(1-&gt;2)-alpha-D-Man-(1-&gt;2)-[alpha-D-Man-(1-&gt;3)-alpha-D-Man-(1-&gt;3)-alpha-D-Man-(1-&gt;2)-alpha-D-Man-(1-&gt;2)](n)-alpha-D-Man-(1-&gt;3)-alpha-D-Man-(1-&gt;3)-alpha-D-Man-(1-&gt;3)-alpha-D-GlcNAc-di-trans,octa-cis-undecaprenyl diphosphate + ADP + H(+). Its pathway is bacterial outer membrane biogenesis; LPS O-antigen biosynthesis. Its function is as follows. Regulates the length of the LPS O-antigen polysaccharide chain. Stops the polymerization of the chain by phosphorylating and then methylating the phosphate on the terminal sugar. This terminal modification is essential for export of the O-antigen across the inner membrane. WbdD is also required for correct localization of the WbdA mannosyltransferase. This chain is O-antigen chain terminator bifunctional methyltransferase/kinase WbdD, found in Escherichia coli.